Consider the following 77-residue polypeptide: Oxyopinin-4a (77 aa).

The N-terminal stretch at 1–20 (MKISQVFIFVFLLMISVAWA) is a signal peptide. The propeptide occupies 21 to 47 (NEAYEEESNYLSERFDADVEEITPEFR). The cysteines at positions 51 and 57 are disulfide-linked.

In terms of tissue distribution, expressed by the venom gland.

It is found in the secreted. The protein resides in the target cell membrane. Functionally, disrupts cell membranes through the formation of pores. Has antibacterial activity against Gram-positive bacteria S.aureus (MIC=10 uM) and B.subtilis (MIC=0.5 uM) as well as Gram-negative bacteria P.fluorescens (MIC=1 uM) and E.coli (MIC=0.5 uM). Has hemolytic activity against human erythrocytes (EC(50)=7 uM). The sequence is that of Oxyopinin-4a from Oxyopes takobius (Lynx spider).